Reading from the N-terminus, the 328-residue chain is Stress response kinase A (328 aa).

Catalysis depends on Asp201, which acts as the Proton acceptor. Residues Asn206 and Asp217 each coordinate Mg(2+). The active site involves Asp217.

The protein belongs to the SrkA/RdoA protein kinase family. In terms of assembly, monomer. Mg(2+) serves as cofactor.

The protein localises to the cytoplasm. It carries out the reaction L-seryl-[protein] + ATP = O-phospho-L-seryl-[protein] + ADP + H(+). It catalyses the reaction L-threonyl-[protein] + ATP = O-phospho-L-threonyl-[protein] + ADP + H(+). Functionally, a protein kinase that phosphorylates Ser and Thr residues. Probably acts to suppress the effects of stress linked to accumulation of reactive oxygen species. Probably involved in the extracytoplasmic stress response. In Salmonella paratyphi A (strain ATCC 9150 / SARB42), this protein is Stress response kinase A.